A 439-amino-acid polypeptide reads, in one-letter code: GTPase Der (439 aa).

EngA-type G domains follow at residues 2 to 166 (SVVA…PAPA) and 176 to 351 (TRLA…IEFN). Residues 8–15 (GRPNVGKS), 55–59 (DTGGF), 118–121 (NKVD), 182–189 (GRPNVGKS), 229–233 (DTAGI), and 294–297 (NKWD) contribute to the GTP site. The region spanning 352–436 (RQVPTGVLNR…PIRLKFKDRN (85 aa)) is the KH-like domain.

Belongs to the TRAFAC class TrmE-Era-EngA-EngB-Septin-like GTPase superfamily. EngA (Der) GTPase family. Associates with the 50S ribosomal subunit.

In terms of biological role, GTPase that plays an essential role in the late steps of ribosome biogenesis. In Syntrophotalea carbinolica (strain DSM 2380 / NBRC 103641 / GraBd1) (Pelobacter carbinolicus), this protein is GTPase Der.